The following is a 522-amino-acid chain: Type-2 serine--tRNA ligase (522 aa).

Alanine 319 is an L-serine binding site. Cysteine 321 is a Zn(2+) binding site. Position 350 (arginine 350) interacts with L-serine. ATP is bound by residues 350-352 and 361-362; these read RWE and RV. 367-369 contributes to the L-serine binding site; the sequence is RIE. Zn(2+) contacts are provided by glutamate 369 and cysteine 476. Arginine 483 serves as a coordination point for ATP.

Belongs to the class-II aminoacyl-tRNA synthetase family. Type-2 seryl-tRNA synthetase subfamily. As to quaternary structure, homodimer. Zn(2+) serves as cofactor.

It is found in the cytoplasm. The catalysed reaction is tRNA(Ser) + L-serine + ATP = L-seryl-tRNA(Ser) + AMP + diphosphate + H(+). The enzyme catalyses tRNA(Sec) + L-serine + ATP = L-seryl-tRNA(Sec) + AMP + diphosphate + H(+). Its pathway is aminoacyl-tRNA biosynthesis; selenocysteinyl-tRNA(Sec) biosynthesis; L-seryl-tRNA(Sec) from L-serine and tRNA(Sec): step 1/1. Its function is as follows. Catalyzes the attachment of serine to tRNA(Ser). Is also able to aminoacylate tRNA(Sec) with serine, to form the misacylated tRNA L-seryl-tRNA(Sec), which will be further converted into selenocysteinyl-tRNA(Sec). This chain is Type-2 serine--tRNA ligase (serS), found in Methanococcus aeolicus (strain ATCC BAA-1280 / DSM 17508 / OCM 812 / Nankai-3).